A 600-amino-acid polypeptide reads, in one-letter code: Putative acetyltransferase MPN_114 (600 aa).

The Proton acceptor role is filled by H323. Residue 396–409 participates in CoA binding; the sequence is TKPLIKAKGIKNSE.

Belongs to the carnitine/choline acetyltransferase family.

The protein is Putative acetyltransferase MPN_114 of Mycoplasma pneumoniae (strain ATCC 29342 / M129 / Subtype 1) (Mycoplasmoides pneumoniae).